A 628-amino-acid polypeptide reads, in one-letter code: Putative serine esterase Mb1866c (628 aa).

Ser-156 serves as the catalytic Acyl-ester intermediate. Catalysis depends on charge relay system residues Asp-322 and His-350.

The protein belongs to the CocE/NonD hydrolase family.

The polypeptide is Putative serine esterase Mb1866c (Mycobacterium bovis (strain ATCC BAA-935 / AF2122/97)).